The primary structure comprises 129 residues: Follitropin subunit beta (129 aa).

Residues M1–C18 form the signal peptide. Disulfide bonds link C21-C69, C35-C84, C38-C122, C46-C100, C50-C102, and C105-C112. Residues N25 and N42 are each glycosylated (N-linked (GlcNAc...) asparagine).

The protein belongs to the glycoprotein hormones subunit beta family. Heterodimer. The active follitropin is a heterodimer composed of an alpha chain/CGA shared with other hormones and a unique beta chain/FSHB shown here.

The protein localises to the secreted. In terms of biological role, together with the alpha chain CGA constitutes follitropin, the follicle-stimulating hormone, and provides its biological specificity to the hormone heterodimer. Binds FSHR, a G protein-coupled receptor, on target cells to activate downstream signaling pathways. Follitropin is involved in follicle development and spermatogenesis in reproductive organs. The protein is Follitropin subunit beta (FSHB) of Cavia porcellus (Guinea pig).